The following is a 253-amino-acid chain: Protein PET20, mitochondrial (253 aa).

The N-terminal 36 residues, 1–36 (MLKLARPFIPPLSRNNAISSGIVLTSRRFQSSFTFL), are a transit peptide targeting the mitochondrion. Residues 44–93 (KNQMKSKRKKGSKKAAYHRQPPEHEHTAPLIKQNKTITKKEHSDVRGSHL) form a disordered region. Over residues 47–60 (MKSKRKKGSKKAAY) the composition is skewed to basic residues. Residues 81-90 (TKKEHSDVRG) show a composition bias toward basic and acidic residues.

It is found in the mitochondrion. Functionally, required for respiratory growth, stability of the mitochondrial genome and for proper assembly or maintenance of mitochondrial proteins. The polypeptide is Protein PET20, mitochondrial (PET20) (Saccharomyces cerevisiae (strain ATCC 204508 / S288c) (Baker's yeast)).